Here is a 199-residue protein sequence, read N- to C-terminus: Thymidylate kinase (199 aa).

ATP is bound at residue 7-14 (GIDGSGKS).

The protein belongs to the thymidylate kinase family.

It carries out the reaction dTMP + ATP = dTDP + ADP. In terms of biological role, phosphorylation of dTMP to form dTDP in both de novo and salvage pathways of dTTP synthesis. This is Thymidylate kinase from Neorickettsia sennetsu (strain ATCC VR-367 / Miyayama) (Ehrlichia sennetsu).